The primary structure comprises 626 residues: Threonine--tRNA ligase (626 aa).

Residues 1–145 (MRMLLIHSDY…SRTIVPEKAV (145 aa)) form an editing domain region. The tract at residues 207–506 (PHVRLMLEQE…QEKGIKPMYP (300 aa)) is catalytic. Zn(2+) is bound by residues Cys299, His351, and His475.

Belongs to the class-II aminoacyl-tRNA synthetase family. In terms of assembly, homodimer. Requires Zn(2+) as cofactor.

It is found in the cytoplasm. It carries out the reaction tRNA(Thr) + L-threonine + ATP = L-threonyl-tRNA(Thr) + AMP + diphosphate + H(+). Functionally, catalyzes the attachment of threonine to tRNA(Thr) in a two-step reaction: L-threonine is first activated by ATP to form Thr-AMP and then transferred to the acceptor end of tRNA(Thr). Also edits incorrectly charged L-seryl-tRNA(Thr). The chain is Threonine--tRNA ligase from Thermococcus kodakarensis (strain ATCC BAA-918 / JCM 12380 / KOD1) (Pyrococcus kodakaraensis (strain KOD1)).